The following is a 546-amino-acid chain: (+)-epi-alpha-bisabolol synthase (546 aa).

Mg(2+) contacts are provided by D297, D301, D441, T445, and E449. The DDXXD motif signature appears at 297 to 301 (DDIYD).

This sequence belongs to the terpene synthase family. Mg(2+) is required as a cofactor.

It catalyses the reaction (2E,6E)-farnesyl diphosphate + H2O = (+)-epi-alpha-bisabolol + diphosphate. The protein operates within secondary metabolite biosynthesis; terpenoid biosynthesis. Sesquiterpene synthase involved in the biosynthesis of (+)-epi-alpha-bisabolol, a precursor of the natural sweetner hernandulcin. The sequence is that of (+)-epi-alpha-bisabolol synthase from Phyla dulcis (Aztec sweet herb).